An 802-amino-acid chain; its full sequence is Outer membrane usher protein PefC (802 aa).

Residues 1–24 (MSFHHRVFKLSALSLALFSHLSFA) form the signal peptide. Cys-782 and Cys-801 are joined by a disulfide.

The protein belongs to the fimbrial export usher family.

The protein resides in the cell outer membrane. In terms of biological role, involved in the export and assembly of FimA fimbrial subunits across the outer membrane. This chain is Outer membrane usher protein PefC (pefC), found in Salmonella typhimurium (strain LT2 / SGSC1412 / ATCC 700720).